The sequence spans 350 residues: N(4)-bis(aminopropyl)spermidine synthase (350 aa).

Belongs to the branched-chain polyamine synthase family.

The protein localises to the cytoplasm. The enzyme catalyses 2 S-adenosyl 3-(methylsulfanyl)propylamine + spermidine = N(4)-bis(aminopropyl)spermidine + 2 S-methyl-5'-thioadenosine + 2 H(+). The protein operates within amine and polyamine biosynthesis. Its function is as follows. Involved in the biosynthesis of branched-chain polyamines, which support the growth of thermophiles under high-temperature conditions. Catalyzes the sequential condensation of spermidine with the aminopropyl groups of decarboxylated S-adenosylmethionines to produce N(4)-bis(aminopropyl)spermidine via N(4)-aminopropylspermidine. The polypeptide is N(4)-bis(aminopropyl)spermidine synthase (Methanocaldococcus jannaschii (strain ATCC 43067 / DSM 2661 / JAL-1 / JCM 10045 / NBRC 100440) (Methanococcus jannaschii)).